We begin with the raw amino-acid sequence, 615 residues long: DNA mismatch repair protein MutL (615 aa).

Residues 363–397 (FAEPAAREPVAPRYTPAPASGSRPAAPWPNAQPGY) form a disordered region. The span at 364-391 (AEPAAREPVAPRYTPAPASGSRPAAPWP) shows a compositional bias: low complexity.

The protein belongs to the DNA mismatch repair MutL/HexB family.

Functionally, this protein is involved in the repair of mismatches in DNA. It is required for dam-dependent methyl-directed DNA mismatch repair. May act as a 'molecular matchmaker', a protein that promotes the formation of a stable complex between two or more DNA-binding proteins in an ATP-dependent manner without itself being part of a final effector complex. This chain is DNA mismatch repair protein MutL, found in Shigella boydii serotype 18 (strain CDC 3083-94 / BS512).